We begin with the raw amino-acid sequence, 266 residues long: Glucosamine-6-phosphate deaminase (266 aa).

The active-site Proton acceptor; for enolization step is Asp-72. Residue Asp-141 is the For ring-opening step of the active site. Catalysis depends on His-143, which acts as the Proton acceptor; for ring-opening step. Glu-148 serves as the catalytic For ring-opening step.

It belongs to the glucosamine/galactosamine-6-phosphate isomerase family. NagB subfamily. As to quaternary structure, homohexamer.

The enzyme catalyses alpha-D-glucosamine 6-phosphate + H2O = beta-D-fructose 6-phosphate + NH4(+). It functions in the pathway amino-sugar metabolism; N-acetylneuraminate degradation; D-fructose 6-phosphate from N-acetylneuraminate: step 5/5. Its activity is regulated as follows. Allosterically activated by N-acetylglucosamine 6-phosphate (GlcNAc6P). Its function is as follows. Catalyzes the reversible isomerization-deamination of glucosamine 6-phosphate (GlcN6P) to form fructose 6-phosphate (Fru6P) and ammonium ion. In Cronobacter sakazakii (strain ATCC BAA-894) (Enterobacter sakazakii), this protein is Glucosamine-6-phosphate deaminase.